We begin with the raw amino-acid sequence, 1099 residues long: Sodium/potassium/calcium exchanger 1 (1099 aa).

Residues 1–452 (MGKLIRMGPQ…DLFSVEERRQ (452 aa)) are Extracellular-facing. Residues 123–134 (PTTTKNNYSPTA) are compositionally biased toward polar residues. Disordered stretches follow at residues 123–150 (PTTT…SSRT), 169–199 (TPRG…RVGT), and 284–304 (PRRV…KSNP). An N-linked (GlcNAc...) asparagine glycan is attached at N290. A helical transmembrane segment spans residues 453–473 (GWVVLHVFGMMYVFVALAIVC). At 474–497 (DEYFVPALGVITDKLQISEDVAGA) the chain is on the cytoplasmic side. Residues 494–534 (VAGATFMAAGGSAPELFTSLIGVFISHSNVGIGTIVGSAVF) form an Alpha-1 repeat. Residues 498–518 (TFMAAGGSAPELFTSLIGVFI) form a helical membrane-spanning segment. The Extracellular segment spans residues 519–522 (SHSN). A helical membrane pass occupies residues 523–543 (VGIGTIVGSAVFNILFVIGTC). Residues 544-563 (SLFSREILNLTWWPLFRDVS) lie on the Cytoplasmic side of the membrane. The helical transmembrane segment at 564–584 (FYILDLIMLILFFLDSLIAWW) threads the bilayer. Residue E585 is a topological domain, extracellular. Residues 586 to 606 (SLLLLLAYAFYVFTMKWNKHI) form a helical membrane-spanning segment. Over 607–907 (EVWVKEQLSR…SLDWPETRQK (301 aa)) the chain is Cytoplasmic. S658 carries the post-translational modification Phosphoserine. Residues 690–901 (EKEEESLNQG…GNEEPLSLDW (212 aa)) are disordered. Phosphothreonine is present on T724. Residues 757 to 769 (PGEEGETAGEGET) show a composition bias toward acidic residues. 2 stretches are compositionally biased toward basic and acidic residues: residues 813–825 (EIHA…KGNE) and 835–849 (AENH…KGVE). Positions 857 to 892 (GDSEEEEEEEEEQEEEEEEEEQEEEEEEEEEEEEKG) are enriched in acidic residues. The helical transmembrane segment at 908–928 (QAIYLFLLPIVFPLWLTVPDV) threads the bilayer. Over 929 to 935 (RRQESRK) the chain is Extracellular. A helical membrane pass occupies residues 936-956 (FFVFTFLGSIMWIAMFSYLMV). The Cytoplasmic portion of the chain corresponds to 957-971 (WWAHQVGETIGISEE). Residues 972-992 (IMGLTILAAGTSIPDLITSVI) traverse the membrane as a helical segment. Residues 979 to 1010 (AAGTSIPDLITSVIVARKGLGDMAVSSSVGSN) form an Alpha-2 repeat. The Extracellular segment spans residues 993 to 1010 (VARKGLGDMAVSSSVGSN). A helical transmembrane segment spans residues 1011–1031 (IFDITVGLPVPWLLFSLINGL). At 1032–1039 (QPVPVSSN) the chain is on the cytoplasmic side. A helical membrane pass occupies residues 1040-1060 (GLFCAIVLLFLMLLFVISSIA). The Extracellular segment spans residues 1061 to 1068 (SCKWRMNK). Residues 1069–1089 (ILGFTMFLLYFVFLIISVMLE) form a helical membrane-spanning segment. Topologically, residues 1090–1099 (DRIISCPVSV) are cytoplasmic.

The protein belongs to the Ca(2+):cation antiporter (CaCA) (TC 2.A.19) family. SLC24A subfamily. Post-translationally, the uncleaved signal sequence is required for efficient membrane targeting and proper membrane integration. As to expression, expressed in the retina, particularly in the inner segment, outer and inner nuclear layers, and ganglion cell layer.

Its subcellular location is the cell membrane. It catalyses the reaction Ca(2+)(out) + K(+)(out) + 4 Na(+)(in) = Ca(2+)(in) + K(+)(in) + 4 Na(+)(out). Functionally, calcium, potassium:sodium antiporter that transports 1 Ca(2+) and 1 K(+) in exchange for 4 Na(+). Critical component of the visual transduction cascade, controlling the calcium concentration of outer segments during light and darkness. Light causes a rapid lowering of cytosolic free calcium in the outer segment of both retinal rod and cone photoreceptors and the light-induced lowering of calcium is caused by extrusion via this protein which plays a key role in the process of light adaptation. The chain is Sodium/potassium/calcium exchanger 1 from Homo sapiens (Human).